A 61-amino-acid chain; its full sequence is MAHPKRRQSKTRTAKRRTHDKAVAPTLAICPNCGEWHVYHTVCGACGYYRGKLAIEKEAAV.

The span at Met-1–His-19 shows a compositional bias: basic residues. The tract at residues Met-1–Asp-20 is disordered.

It belongs to the bacterial ribosomal protein bL32 family.

In Bacteroides fragilis (strain YCH46), this protein is Large ribosomal subunit protein bL32.